Reading from the N-terminus, the 206-residue chain is Potassium channel B446_29190 (206 aa).

A topological domain (cytoplasmic) is located at residue methionine 1. A helical transmembrane segment spans residues 2–25 (NESGRVEAFSDGVFAIAITLLILD). Residues 6–12 (RVEAFSD) carry the RxxxFSD motif motif. The Extracellular segment spans residues 26 to 44 (IKVPKADGPGGLWHALGAQ). A short helix H1 region spans residues 31–34 (ADGP). Positions 36–42 (GLWHALG) are short helix H2. The helical transmembrane segment at 45-70 (WPSYAAYVVSFLVIGIMWVNHHQVFS) threads the bilayer. The Cytoplasmic segment spans residues 71–76 (YVARVD). Residues 77–102 (RALMFLNLLVLMVVAAVPWPTAMLAE) traverse the membrane as a helical segment. Over 103 to 110 (YLREDRAS) the chain is Extracellular. Residues 111–135 (HVAAAVYSLVMVAMALAFQALWWHL) traverse the membrane as a helical segment. The Cytoplasmic portion of the chain corresponds to 136-147 (TRTGHLFDPRVD). A helical membrane pass occupies residues 148-174 (APAARATRIRFALGSLGYPLTVGLAFV). Residues 175–176 (SA) are Extracellular-facing. A helical membrane pass occupies residues 177 to 192 (PLTLAAHGLLALYYGF). Residues 193–206 (NQVPVPTREAAAPS) lie on the Cytoplasmic side of the membrane.

This sequence belongs to the TMEM175 family. In terms of assembly, homotetramer.

The protein resides in the membrane. The enzyme catalyses K(+)(in) = K(+)(out). Potassium channel. The polypeptide is Potassium channel B446_29190 (Streptomyces collinus (strain DSM 40733 / Tue 365)).